We begin with the raw amino-acid sequence, 189 residues long: Heme-binding protein 1 (189 aa).

Belongs to the HEBP family. Monomer.

Its subcellular location is the cytoplasm. Its function is as follows. May bind free porphyrinogens that may be present in the cell and thus facilitate removal of these potentially toxic compound. Binds with a high affinity to one molecule of heme or porphyrins. It binds metalloporphyrins, free porphyrins and N-methylprotoporphyrin with similar affinities. This chain is Heme-binding protein 1 (HEBP1), found in Sus scrofa (Pig).